The following is a 162-amino-acid chain: MRLALVAVGRLKRGPERDLAEGYRARADALARGLGLSAVQLTELPESRARRAPDRCAEEGAAILACLPAGSAVIVMDEGGRAVTSAGLAEQVAAWRDGGRPGLTIVIGGADGLCESVRHRADLVFAFGAATLPHGLVRVLVLEQLYRVMTILAGHPYHRGAP.

G108 contacts S-adenosyl-L-methionine.

This sequence belongs to the RNA methyltransferase RlmH family. In terms of assembly, homodimer.

It is found in the cytoplasm. The catalysed reaction is pseudouridine(1915) in 23S rRNA + S-adenosyl-L-methionine = N(3)-methylpseudouridine(1915) in 23S rRNA + S-adenosyl-L-homocysteine + H(+). Its function is as follows. Specifically methylates the pseudouridine at position 1915 (m3Psi1915) in 23S rRNA. This chain is Ribosomal RNA large subunit methyltransferase H, found in Methylobacterium sp. (strain 4-46).